A 187-amino-acid chain; its full sequence is Protein GrpE (187 aa).

Over residues methionine 1–glutamate 11 the composition is skewed to basic and acidic residues. Positions methionine 1–glutamate 21 are disordered.

It belongs to the GrpE family. In terms of assembly, homodimer.

Its subcellular location is the cytoplasm. Participates actively in the response to hyperosmotic and heat shock by preventing the aggregation of stress-denatured proteins, in association with DnaK and GrpE. It is the nucleotide exchange factor for DnaK and may function as a thermosensor. Unfolded proteins bind initially to DnaJ; upon interaction with the DnaJ-bound protein, DnaK hydrolyzes its bound ATP, resulting in the formation of a stable complex. GrpE releases ADP from DnaK; ATP binding to DnaK triggers the release of the substrate protein, thus completing the reaction cycle. Several rounds of ATP-dependent interactions between DnaJ, DnaK and GrpE are required for fully efficient folding. The sequence is that of Protein GrpE from Chlamydia caviae (strain ATCC VR-813 / DSM 19441 / 03DC25 / GPIC) (Chlamydophila caviae).